The chain runs to 425 residues: UDP-N-acetylglucosamine 1-carboxyvinyltransferase (425 aa).

22–23 (KN) contacts phosphoenolpyruvate. R91 lines the UDP-N-acetyl-alpha-D-glucosamine pocket. The active-site Proton donor is C115. C115 carries the post-translational modification 2-(S-cysteinyl)pyruvic acid O-phosphothioketal. UDP-N-acetyl-alpha-D-glucosamine-binding positions include 120 to 124 (RPVDL), D309, and I331.

This sequence belongs to the EPSP synthase family. MurA subfamily.

It localises to the cytoplasm. It carries out the reaction phosphoenolpyruvate + UDP-N-acetyl-alpha-D-glucosamine = UDP-N-acetyl-3-O-(1-carboxyvinyl)-alpha-D-glucosamine + phosphate. The protein operates within cell wall biogenesis; peptidoglycan biosynthesis. Functionally, cell wall formation. Adds enolpyruvyl to UDP-N-acetylglucosamine. In Akkermansia muciniphila (strain ATCC BAA-835 / DSM 22959 / JCM 33894 / BCRC 81048 / CCUG 64013 / CIP 107961 / Muc), this protein is UDP-N-acetylglucosamine 1-carboxyvinyltransferase.